The following is a 142-amino-acid chain: Hemoglobin subunit alpha-2 (142 aa).

The Globin domain maps to 2–142; the sequence is LLSADDKKHI…VSTVLTSKYR (141 aa). His-59 serves as a coordination point for O2. His-88 contacts heme b.

The protein belongs to the globin family. In terms of assembly, heterotetramer of two alpha chains and two beta chains. In terms of tissue distribution, red blood cells.

Its function is as follows. Involved in oxygen transport from the lung to the various peripheral tissues. The chain is Hemoglobin subunit alpha-2 (hba2) from Xenopus laevis (African clawed frog).